The chain runs to 130 residues: HTH-type transcriptional repressor YtrA (130 aa).

In terms of domain architecture, HTH gntR-type spans 10–78 (TPIYEQIIQQ…RGRGTYISEN (69 aa)). The segment at residues 38–57 (VRELATIIIANPNTVSKAYK) is a DNA-binding region (H-T-H motif).

Functionally, negatively regulates ABC transporter complex ytrBCDEF that plays a role in acetoin utilization during stationary phase and sporulation. This is HTH-type transcriptional repressor YtrA (ytrA) from Bacillus subtilis (strain 168).